Reading from the N-terminus, the 137-residue chain is MKRLLTLAWFLACSVPAVPGGLLELKSMIEKVTGKNAVKNYGFYGCYCGWGGHGTPKDGTDWCCRMHDRCYGLLEEKHCAIRTQSYDYRFTQDLVICEHDSFCPVRLCACDRKLVYCLRRNLWSYNRLYQYYPNFLC.

Residues 1 to 20 form the signal peptide; the sequence is MKRLLTLAWFLACSVPAVPG. 6 cysteine pairs are disulfide-bonded: Cys46/Cys137, Cys48/Cys64, Cys63/Cys117, Cys70/Cys110, Cys79/Cys103, and Cys97/Cys108. Positions 47, 49, and 51 each coordinate Ca(2+). The active site involves His67. Asp68 contributes to the Ca(2+) binding site. Residue Asp111 is part of the active site.

The protein belongs to the phospholipase A2 family. The cofactor is Ca(2+). This enzyme lacks one of the seven disulfide bonds found in similar PA2 proteins.

Its subcellular location is the secreted. The protein localises to the cell membrane. The protein resides in the cytoplasmic vesicle. It is found in the phagosome. It localises to the recycling endosome. Its subcellular location is the golgi apparatus. The protein localises to the cis-Golgi network. The protein resides in the trans-Golgi network. The enzyme catalyses a 1,2-diacyl-sn-glycero-3-phosphocholine + H2O = a 1-acyl-sn-glycero-3-phosphocholine + a fatty acid + H(+). The catalysed reaction is 1-hexadecanoyl-2-(9Z-octadecenoyl)-sn-glycero-3-phosphocholine + H2O = 1-hexadecanoyl-sn-glycero-3-phosphocholine + (9Z)-octadecenoate + H(+). It carries out the reaction 1-hexadecanoyl-2-(5Z,8Z,11Z,14Z-eicosatetraenoyl)-sn-glycero-3-phosphocholine + H2O = 1-hexadecanoyl-sn-glycero-3-phosphocholine + (5Z,8Z,11Z,14Z)-eicosatetraenoate + H(+). It catalyses the reaction 1-hexadecanoyl-2-(9Z,12Z-octadecadienoyl)-sn-glycero-3-phosphoethanolamine + H2O = 1-hexadecanoyl-sn-glycero-3-phosphoethanolamine + (9Z,12Z)-octadecadienoate + H(+). The enzyme catalyses 1-hexadecanoyl-2-(5Z,8Z,11Z,14Z-eicosatetraenoyl)-sn-glycero-3-phosphoethanolamine + H2O = 1-hexadecanoyl-sn-glycero-3-phosphoethanolamine + (5Z,8Z,11Z,14Z)-eicosatetraenoate + H(+). The catalysed reaction is 1-octadecanoyl-2-(5Z,8Z,11Z,14Z-eicosatetraenoyl)-sn-glycero-3-phospho-(1D-myo-inositol) + H2O = 1-octadecanoyl-sn-glycero-3-phospho-(1D-myo-inositol) + (5Z,8Z,11Z,14Z)-eicosatetraenoate + H(+). It carries out the reaction 1-hexadecanoyl-2-(9Z-octadecenoyl)-sn-glycero-3-phosphoglycerol + H2O = 1-hexadecanoyl-sn-glycero-3-phosphoglycerol + (9Z)-octadecenoate + H(+). It catalyses the reaction N-hexadecanoyl-1,2-di-(9Z-octadecenoyl)-sn-glycero-3-phosphoethanolamine + H2O = N-hexadecanoyl-1-(9Z-octadecenoyl)-sn-glycero-3-phosphoethanolamine + (9Z)-octadecenoate + H(+). The enzyme catalyses 1'-[1,2-di-(9Z-octadecenoyl)-sn-glycero-3-phospho]-3'-[1-(9Z-octadecenoyl)-sn-glycero-3-phospho]-glycerol + H2O = 1',3'-bis-[1-(9Z-octadecenoyl)-sn-glycero-3-phospho]-glycerol + (9Z)-octadecenoate + H(+). The catalysed reaction is 1',3'-bis[1,2-di-(9Z-octadecenoyl)-sn-glycero-3-phospho]-glycerol + H2O = 1'-[1,2-di-(9Z-octadecenoyl)-sn-glycero-3-phospho]-3'-[1-(9Z-octadecenoyl)-sn-glycero-3-phospho]-glycerol + (9Z)-octadecenoate + H(+). The protein operates within lipid metabolism; phospholipid metabolism. Its pathway is lipid metabolism; leukotriene B4 biosynthesis. It functions in the pathway lipid metabolism; leukotriene C4 biosynthesis. Its function is as follows. Secretory calcium-dependent phospholipase A2 that primarily targets extracellular phospholipids. Hydrolyzes the ester bond of the fatty acyl group attached at sn-2 position of phospholipids (phospholipase A2 activity), preferentially releasing fatty acyl groups with a low degree of unsaturation such as oleoyl (C18:1) and linoleoyl (C18:2) groups. Hydrolyzes low-density lipoprotein (LDL) phospholipids releasing unsaturated fatty acids that drive macrophage polarization toward an M2 phenotype. May act in an autocrine and paracrine manner. Contributes to lipid remodeling of cellular membranes at different subcellular locations and generation of lipid mediators involved in pathogen clearance. Cleaves sn-2 fatty acyl chains of cardiolipin, a major component of the inner membrane of mitochondria and bacterial membranes. Promotes phagocytosis of bacteria in macrophages through production of lysophosphatidylethanolamines. Displays bactericidal activity against Gram-positive bacteria by directly hydrolyzing phospholipids of the bacterial membrane. Promotes phagocytosis and killing of ingested fungi likely through controlling phagosome-lysosome fusion and phagosome maturation. Plays a role in biosynthesis of cysteinyl leukotrienes (CysLTs) in myeloid cells. In eosinophils, triggers perinuclear arachidonate release and LTC4 synthesis in a PLA2G4A-independent way. In neutrophils, amplifies CysLTs biosynthesis initiated by PLA2G4A. Promotes immune complex clearance in macrophages via stimulating synthesis of CysLTs, which act through CYSLTR1 to trigger phagocytosis. May regulate antigen processing in antigen-presenting cells. In pulmonary macrophages regulates IL33 production required for activation of group 2 innate lymphoid cells. May play a role in the biosynthesis of N-acyl ethanolamines that regulate energy metabolism. Hydrolyzes N-acyl phosphatidylethanolamines to N-acyl lysophosphatidylethanolamines, which are further cleaved by a lysophospholipase D to release N-acyl ethanolamines. This Rattus norvegicus (Rat) protein is Phospholipase A2 group V (Pla2g5).